A 479-amino-acid polypeptide reads, in one-letter code: ATP-dependent RNA helicase DDX19B (479 aa).

Residue Ala2 is modified to N-acetylalanine. The segment at 2 to 300 is N-terminal lobe; the sequence is ATDSWALAVD…DPNVIKLKRE (299 aa). Residues 34–54 form a disordered region; it reads TNGAVVKTNANAEKTDEEEKE. The interval 55 to 68 is N-terminal helix; the sequence is DRAAQSLLNKLIRS. The Q motif signature appears at 92–120; that stretch reads KSFEELRLKPQLLQGVYAMGFNRPSKIQE. ATP contacts are provided by residues Gln119 and 138 to 145; that span reads SQSGTGKT. One can recognise a Helicase ATP-binding domain in the interval 125 to 295; sequence LMLAEPPQNL…QKVVPDPNVI (171 aa). Positions 242–245 match the DEAD box motif; sequence DEAD. The tract at residues 301–479 is C-terminal lobe; the sequence is EETLDTIKQY…DLDEIEKIAN (179 aa). The region spanning 306-474 is the Helicase C-terminal domain; the sequence is TIKQYYVLCS…RLDTDDLDEI (169 aa). The ATP site is built by Arg429 and Arg432.

The protein belongs to the DEAD box helicase family. DDX19/DBP5 subfamily. As to quaternary structure, associates with the nuclear pore complex via interaction with NUP214. Interacts with NUP214 or RNA in a mutually exclusive manner.

It localises to the cytoplasm. It is found in the nucleus. The protein localises to the nucleoplasm. The enzyme catalyses ATP + H2O = ADP + phosphate + H(+). Functionally, ATP-dependent RNA helicase involved in mRNA export from the nucleus. Rather than unwinding RNA duplexes, DDX19B functions as a remodeler of ribonucleoprotein particles, whereby proteins bound to nuclear mRNA are dissociated and replaced by cytoplasmic mRNA binding proteins. In Homo sapiens (Human), this protein is ATP-dependent RNA helicase DDX19B (DDX19B).